The primary structure comprises 838 residues: Probable inorganic carbon transporter subunit DabA (838 aa).

Zn(2+) is bound by residues cysteine 353, aspartate 355, histidine 537, and cysteine 552.

It belongs to the inorganic carbon transporter (TC 9.A.2) DabA family. Forms a complex with DabB. It depends on Zn(2+) as a cofactor.

It localises to the cell membrane. In terms of biological role, part of an energy-coupled inorganic carbon pump. The chain is Probable inorganic carbon transporter subunit DabA from Chloroflexus aurantiacus (strain ATCC 29366 / DSM 635 / J-10-fl).